The sequence spans 396 residues: Large ribosomal subunit protein uL24m (396 aa).

Positions 374–396 are disordered; sequence QLSLGGGQEDAATTTSPEQPKVV. Over residues 384-396 the composition is skewed to polar residues; the sequence is AATTTSPEQPKVV.

It belongs to the universal ribosomal protein uL24 family. Component of the mitochondrial large ribosomal subunit (mt-LSU). Mature N.crassa 74S mitochondrial ribosomes consist of a small (37S) and a large (54S) subunit. The 37S small subunit contains a 16S ribosomal RNA (16S mt-rRNA) and 32 different proteins. The 54S large subunit contains a 23S rRNA (23S mt-rRNA) and 42 different proteins. uL24m forms the wall of the exit tunnel.

Its subcellular location is the mitochondrion. In terms of biological role, component of the mitochondrial ribosome (mitoribosome), a dedicated translation machinery responsible for the synthesis of mitochondrial genome-encoded proteins, including at least some of the essential transmembrane subunits of the mitochondrial respiratory chain. The mitoribosomes are attached to the mitochondrial inner membrane and translation products are cotranslationally integrated into the membrane. This chain is Large ribosomal subunit protein uL24m (mrpl40), found in Neurospora crassa (strain ATCC 24698 / 74-OR23-1A / CBS 708.71 / DSM 1257 / FGSC 987).